Reading from the N-terminus, the 447-residue chain is Probable glycine dehydrogenase (decarboxylating) subunit 1 (447 aa).

This sequence belongs to the GcvP family. N-terminal subunit subfamily. The glycine cleavage system is composed of four proteins: P, T, L and H. In this organism, the P 'protein' is a heterodimer of two subunits.

The enzyme catalyses N(6)-[(R)-lipoyl]-L-lysyl-[glycine-cleavage complex H protein] + glycine + H(+) = N(6)-[(R)-S(8)-aminomethyldihydrolipoyl]-L-lysyl-[glycine-cleavage complex H protein] + CO2. The glycine cleavage system catalyzes the degradation of glycine. The P protein binds the alpha-amino group of glycine through its pyridoxal phosphate cofactor; CO(2) is released and the remaining methylamine moiety is then transferred to the lipoamide cofactor of the H protein. This Sulfolobus acidocaldarius (strain ATCC 33909 / DSM 639 / JCM 8929 / NBRC 15157 / NCIMB 11770) protein is Probable glycine dehydrogenase (decarboxylating) subunit 1.